Reading from the N-terminus, the 434-residue chain is Cullin-like protein 5 (434 aa).

Residues 1-34 form a disordered region; that stretch reads MKRSISPDPFSSTKSPKLVHHSPDDGGAEGNPYR.

It belongs to the cullin family.

The chain is Cullin-like protein 5 from Arabidopsis thaliana (Mouse-ear cress).